The chain runs to 534 residues: 5'-nucleotidase domain-containing protein 3 (534 aa).

D104 functions as the Nucleophile in the catalytic mechanism. Residues D104 and D106 each coordinate Mg(2+). D106 acts as the Proton donor in catalysis. 234–242 (KEAIRDVHV) lines the substrate pocket. D372 is a binding site for Mg(2+).

Belongs to the 5'(3')-deoxyribonucleotidase family. Mg(2+) serves as cofactor.

In Xenopus tropicalis (Western clawed frog), this protein is 5'-nucleotidase domain-containing protein 3 (nt5dc3).